The following is an 87-amino-acid chain: Tektin-2 (87 aa).

Positions 26-55 form a coiled coil; it reads VEEELLKEVEVIEATKKALQQRVSQAFQQL.

The protein belongs to the tektin family. In terms of assembly, microtubule inner protein component of sperm flagellar doublet microtubules. May interact with CCDC172. Post-translationally, tyrosine phosphorylated. Ubiquitinated, leading to its degradation. Deubiquitinated by USP16, promoting its stability. As to expression, detected in sperm flagella (at protein level).

The protein localises to the cytoplasm. It localises to the cytoskeleton. It is found in the cilium axoneme. The protein resides in the flagellum axoneme. Its subcellular location is the microtubule organizing center. Microtubule inner protein (MIP) part of the dynein-decorated doublet microtubules (DMTs) in cilia and flagellar axoneme. Plays a key role in the assembly or attachment of the inner dynein arm to microtubules in sperm flagella and tracheal cilia. Forms filamentous polymers in the walls of ciliary and flagellar microtubules. This chain is Tektin-2, found in Mesocricetus auratus (Golden hamster).